Consider the following 399-residue polypeptide: Protein phosphatase 2C 37 (399 aa).

Positions 104-389 (KIGTTSVCGR…DNVSVVVVDL (286 aa)) constitute a PPM-type phosphatase domain. Residues Asp142 and Gly143 each coordinate Mn(2+). Zn(2+)-binding residues include Cys146, His148, Cys208, and Cys210. The Mn(2+) site is built by Asp327, Asp331, and Asp380.

The protein belongs to the PP2C family. As to quaternary structure, interacts with AKT2/AKT3. Interacts with ABA-bounded PYR1, PYL1, PYL2, PYL3, PYL4, PYL9 and PYL12, and with free PYL2, PYL3, PYL4 and PYL13. Binds to and inactivates SLAC1 and SRK2E. The inactivation of SRK2E does not require phosphatase activity. Interacts with CBL1, CBL2, CBL3, CBL5, and CBL7, but not CBL4, CBL6, and CBL9. Interacts with RGLG1 and RGLG5. Interacts with KIN10. Mg(2+) serves as cofactor. It depends on Mn(2+) as a cofactor. In terms of processing, ubiquitinated by RGLG1 and RGLG5 in response to abscisic acid (ABA). Ubiquitination of PP2CA leads to its degradation by the proteasome. Mostly expressed in seeds and leaves, and, to a lower extent, in roots, stems, and flowers, particularly in siliques. Essentially found in the phloem.

The catalysed reaction is O-phospho-L-seryl-[protein] + H2O = L-seryl-[protein] + phosphate. It carries out the reaction O-phospho-L-threonyl-[protein] + H2O = L-threonyl-[protein] + phosphate. Repressed by PYR/PYL/RCAR ABA receptors in an ABA-dependent manner. In terms of biological role, major negative regulator of abscisic acid (ABA) responses during seed germination and cold acclimation. Confers insensitivity to ABA. Modulates negatively the AKT2/3 activity, which mediates K(+) transport and membrane polarization during stress situations, probably by dephosphorylation. Prevents stomata closure by inactivating the S-type anion efflux channel SLAC1 and its activator SRK2E. Represses KIN10 activity by the specific dephosphorylation of its T-loop Thr-198, leading to a poststress inactivation of SnRK1 signaling. The sequence is that of Protein phosphatase 2C 37 (PP2CA) from Arabidopsis thaliana (Mouse-ear cress).